The following is a 1002-amino-acid chain: Ephrin type-B receptor 5 (1002 aa).

The N-terminal stretch at 1–29 (MDSNADISARRVSGMDWLWLVCFFHLVTS) is a signal peptide. Over 30–564 (LEEILLDTTG…AQDRLPLIVG (535 aa)) the chain is Extracellular. The 183-residue stretch at 31–213 (EEILLDTTGE…FFYKCPAVVK (183 aa)) folds into the Eph LBD domain. Fibronectin type-III domains lie at 344-452 (APRD…TSQS) and 453-548 (VPSA…TLMA). The N-linked (GlcNAc...) asparagine glycan is linked to Asn-446. Residues 565 to 585 (SALGGLAFLVIAAIAILAIIF) form a helical membrane-spanning segment. The Cytoplasmic segment spans residues 586–1002 (KSKRRETPYT…HLNQLEPVEV (417 aa)). Residues 637–900 (IKIEEVIGSG…QIVSALDKMI (264 aa)) form the Protein kinase domain. ATP contacts are provided by residues 643 to 651 (IGSGEFGEV) and Lys-669. Catalysis depends on Asp-762, which acts as the Proton acceptor. Positions 906–928 (LKATGTGSSRPSQPLLSNSPPDF) are disordered. The span at 910–928 (GTGSSRPSQPLLSNSPPDF) shows a compositional bias: polar residues. The region spanning 929–993 (PSLSNAHEWL…LNSIQLMKVH (65 aa)) is the SAM domain. The PDZ-binding signature appears at 1000-1002 (VEV).

It belongs to the protein kinase superfamily. Tyr protein kinase family. Ephrin receptor subfamily. As to expression, most abundant in thymus and detectable in brain, retina, kidney, lung and heart. Not detected in skeletal muscle and liver.

It is found in the membrane. The catalysed reaction is L-tyrosyl-[protein] + ATP = O-phospho-L-tyrosyl-[protein] + ADP + H(+). In terms of biological role, receptor for members of the ephrin-B family. This is Ephrin type-B receptor 5 (EPHB5) from Gallus gallus (Chicken).